A 439-amino-acid polypeptide reads, in one-letter code: ATP-dependent RNA helicase SUB2 (439 aa).

Acidic residues predominate over residues 1–19; the sequence is MSHEGEEDLLEYSDNEQEI. The segment at 1–48 is disordered; that stretch reads MSHEGEEDLLEYSDNEQEIQVDNKETAVEGTTENEATQENGEADKKGS. A compositionally biased stretch (polar residues) spans 29 to 40; sequence EGTTENEATQEN. Residues 55-83 carry the Q motif motif; sequence TGFKDFLLKPELSRAIIDCGFEHPSEVQQ. Positions 86 to 261 constitute a Helicase ATP-binding domain; it reads IPQSIHGTDV…RRFLQNPLEI (176 aa). 99-106 is a binding site for ATP; sequence AKSGLGKT. The DECD box signature appears at 208-211; it reads DECD. The region spanning 273-434 is the Helicase C-terminal domain; that stretch reads GLQQYYIKLE…EFPEEGIDPS (162 aa).

The protein belongs to the DEAD box helicase family. DECD subfamily.

It is found in the nucleus. It carries out the reaction ATP + H2O = ADP + phosphate + H(+). In terms of biological role, ATP-binding RNA helicase involved in transcription elongation and required for the export of mRNA out of the nucleus. SUB2 also plays a role in pre-mRNA splicing and spliceosome assembly. May be involved in rDNA and telomeric silencing, and maintenance of genome integrity. This is ATP-dependent RNA helicase SUB2 (SUB2) from Candida glabrata (strain ATCC 2001 / BCRC 20586 / JCM 3761 / NBRC 0622 / NRRL Y-65 / CBS 138) (Yeast).